Reading from the N-terminus, the 272-residue chain is Imidazole glycerol phosphate synthase subunit HisF (272 aa).

Catalysis depends on residues Asp11 and Asp130.

This sequence belongs to the HisA/HisF family. Heterodimer of HisH and HisF.

The protein localises to the cytoplasm. It catalyses the reaction 5-[(5-phospho-1-deoxy-D-ribulos-1-ylimino)methylamino]-1-(5-phospho-beta-D-ribosyl)imidazole-4-carboxamide + L-glutamine = D-erythro-1-(imidazol-4-yl)glycerol 3-phosphate + 5-amino-1-(5-phospho-beta-D-ribosyl)imidazole-4-carboxamide + L-glutamate + H(+). It functions in the pathway amino-acid biosynthesis; L-histidine biosynthesis; L-histidine from 5-phospho-alpha-D-ribose 1-diphosphate: step 5/9. IGPS catalyzes the conversion of PRFAR and glutamine to IGP, AICAR and glutamate. The HisF subunit catalyzes the cyclization activity that produces IGP and AICAR from PRFAR using the ammonia provided by the HisH subunit. The chain is Imidazole glycerol phosphate synthase subunit HisF from Methanococcus maripaludis (strain C5 / ATCC BAA-1333).